The primary structure comprises 551 residues: Glucans biosynthesis protein D (551 aa).

Residues 1–32 constitute a signal peptide (tat-type signal); sequence MDRRRFIKGSMAMAAVCGTSGIASLFSQAAFA.

This sequence belongs to the OpgD/OpgG family. Predicted to be exported by the Tat system. The position of the signal peptide cleavage has not been experimentally proven.

The protein localises to the periplasm. Its pathway is glycan metabolism; osmoregulated periplasmic glucan (OPG) biosynthesis. Functionally, probably involved in the control of the structural glucose backbone of osmoregulated periplasmic glucans (OPGs). The sequence is that of Glucans biosynthesis protein D from Escherichia coli O9:H4 (strain HS).